Here is a 409-residue protein sequence, read N- to C-terminus: LIM/homeobox protein ttx-3 (409 aa).

2 LIM zinc-binding domains span residues 108–169 (NQCC…RYQK) and 171–232 (CRKC…VRST). Disordered stretches follow at residues 245–299 (AVVA…RTSF) and 372–409 (MNPP…YTHL). Pro residues predominate over residues 247 to 267 (VAPPPPPPTTTTAPPPAAPEQ). Residues 292–351 (SKRMRTSFKHHQLRAMKTYFALNHNPDAKDLKQLAAKTNLTKRVLQVWFQNARAKYRREL) constitute a DNA-binding region (homeobox). Over residues 382 to 409 (GHSTDGYQLNTPPLSSEIYSPNSNYTHL) the composition is skewed to polar residues.

Expressed in the AIA, AIN and AIY interneurons, and in the NSM neurons. Expressed also in ADL and ASI sensory neurons in 60-70% of L2 larvae. Expression is also detected in head muscles of embryos and some early larvae but not late larvae or adults.

It localises to the nucleus. It is found in the perikaryon. Its subcellular location is the cell projection. The protein resides in the axon. Transcription factor. Binds to a sequence motif, 5'-TTATTGGCTTCGTTAA-3', which may be involved in AIY interneuron function, in the regulatory elements of target genes; binding is more efficient, in vitro, together with homeobox protein ceh-10. Required for specification of the AIA and AIY interneurons and the NSM neurons. Positively regulates the expression of a number of genes including ceh-10, ceh-23, kal-1, hen-1, ser-2, unc-17 and sra-11 in AIY neurons, and cat-4, flp-4, bas-1, ptps-1 and mgl-1 in NSM neurons. In concert with WNT/beta-catenin signaling, initiates expression of homeobox ceh-10 in AIY, but not in the sister cells, SMDD motor neurons. Also acts in an autoregulatory feedback loop to maintain its own expression. Plays a role in the thermotactic response, olfactory imprinting, regulation of longevity, control of dauer formation and axon outgrowth and pathfinding. Not required for normal chemosensory behavior. This is LIM/homeobox protein ttx-3 from Caenorhabditis elegans.